Here is a 150-residue protein sequence, read N- to C-terminus: Arginine repressor (150 aa).

The protein belongs to the ArgR family.

It localises to the cytoplasm. It functions in the pathway amino-acid biosynthesis; L-arginine biosynthesis [regulation]. Regulates arginine biosynthesis genes. In Carboxydothermus hydrogenoformans (strain ATCC BAA-161 / DSM 6008 / Z-2901), this protein is Arginine repressor.